The following is a 490-amino-acid chain: Cobyric acid synthase (490 aa).

In terms of domain architecture, GATase cobBQ-type spans 250-432 (QLEIVVIRLP…LHGLLDNHAW (183 aa)). Cys328 serves as the catalytic Nucleophile. Residue His424 is part of the active site.

The protein belongs to the CobB/CobQ family. CobQ subfamily.

The protein operates within cofactor biosynthesis; adenosylcobalamin biosynthesis. Functionally, catalyzes amidations at positions B, D, E, and G on adenosylcobyrinic A,C-diamide. NH(2) groups are provided by glutamine, and one molecule of ATP is hydrogenolyzed for each amidation. The chain is Cobyric acid synthase from Gloeobacter violaceus (strain ATCC 29082 / PCC 7421).